Here is a 283-residue protein sequence, read N- to C-terminus: Elongation factor Ts (283 aa).

Residues 80-83 (TDFV) are involved in Mg(2+) ion dislocation from EF-Tu.

It belongs to the EF-Ts family.

The protein resides in the cytoplasm. In terms of biological role, associates with the EF-Tu.GDP complex and induces the exchange of GDP to GTP. It remains bound to the aminoacyl-tRNA.EF-Tu.GTP complex up to the GTP hydrolysis stage on the ribosome. In Pectobacterium atrosepticum (strain SCRI 1043 / ATCC BAA-672) (Erwinia carotovora subsp. atroseptica), this protein is Elongation factor Ts.